A 181-amino-acid polypeptide reads, in one-letter code: Ribulose bisphosphate carboxylase small subunit, chloroplastic 1 (181 aa).

The N-terminal 54 residues, 1 to 54 (MASSMLSSAAVVTSPAQATMVAPFTGLKSSSAFPVTRKANNDITSIVSNGGRVS), are a transit peptide targeting the chloroplast.

This sequence belongs to the RuBisCO small chain family. Heterohexadecamer of 8 large and 8 small subunits.

It is found in the plastid. It localises to the chloroplast. Functionally, ruBisCO catalyzes two reactions: the carboxylation of D-ribulose 1,5-bisphosphate, the primary event in carbon dioxide fixation, as well as the oxidative fragmentation of the pentose substrate. Both reactions occur simultaneously and in competition at the same active site. Although the small subunit is not catalytic it is essential for maximal activity. This Brassica napus (Rape) protein is Ribulose bisphosphate carboxylase small subunit, chloroplastic 1.